We begin with the raw amino-acid sequence, 461 residues long: Coagulation factor IX (461 aa).

The N-terminal stretch at 1–28 is a signal peptide; the sequence is MQRVNMIMAESPGLITICLLGYLLSAEC. The propeptide occupies 29 to 46; that stretch reads TVFLDHENANKILNRPKR. Residues tyrosine 47, asparagine 48, glutamate 53, glutamate 54, glutamate 61, glutamate 63, glutamate 66, glutamate 67, glutamate 72, glutamate 73, and glutamate 76 each contribute to the Ca(2+) site. In terms of domain architecture, Gla spans 47–92; that stretch reads YNSGKLEEFVQGNLERECMEEKCSFEEAREVFENTERTTEFWKQYV. A 4-carboxyglutamate mark is found at glutamate 53, glutamate 54, glutamate 61, glutamate 63, glutamate 66, glutamate 67, glutamate 72, glutamate 73, glutamate 76, glutamate 79, and glutamate 82. Residue glutamate 61 coordinates Mg(2+). A disulfide bond links cysteine 64 and cysteine 69. Glutamate 66 contacts Mg(2+). Glutamate 72 contacts Mg(2+). Glutamate 76 is a Mg(2+) binding site. Position 82 (glutamate 82) interacts with Ca(2+). Glutamate 82 is a Mg(2+) binding site. The O-linked (GalNAc...) threonine glycan is linked to threonine 85. Ca(2+) is bound by residues glutamate 86, aspartate 93, glycine 94, and glutamine 96. Glutamate 86 is subject to 4-carboxyglutamate. Residue glutamate 86 coordinates Mg(2+). Residues 93-129 form the EGF-like 1; calcium-binding domain; it reads DGDQCESNPCLNGGSCKDDINSYECWCPFGFEGKNCE. Cystine bridges form between cysteine 97–cysteine 108, cysteine 102–cysteine 117, cysteine 119–cysteine 128, cysteine 134–cysteine 145, cysteine 141–cysteine 155, cysteine 157–cysteine 170, cysteine 178–cysteine 335, cysteine 252–cysteine 268, cysteine 382–cysteine 396, and cysteine 407–cysteine 435. Serine 99 carries an O-linked (Glc...) serine glycan. Residue serine 107 is glycosylated (O-linked (Fuc...) serine). Positions 110 and 111 each coordinate Ca(2+). Residue aspartate 110 is modified to (3R)-3-hydroxyaspartate. Serine 114 carries the phosphoserine modification. Positions 130–171 constitute an EGF-like 2 domain; sequence LDVTCNIKNGRCEQFCKNSADNKVVCSCTEGYRLAENQKSCE. Positions 192–226 are cleaved as a propeptide — activation peptide; that stretch reads AETVFPDVDYVNSTEAETILDNITQSTQSFNDFTR. At tyrosine 201 the chain carries Sulfotyrosine. A glycan (N-linked (GlcNAc...) asparagine) is linked at asparagine 203. Serine 204 carries the post-translational modification Phosphoserine. Threonine 205 bears the Phosphothreonine; alternate mark. An O-linked (GalNAc...) threonine; alternate glycan is attached at threonine 205. Asparagine 213 carries N-linked (GlcNAc...) asparagine glycosylation. Threonine 215 and threonine 225 each carry an O-linked (GalNAc...) threonine glycan. The Peptidase S1 domain occupies 227-459; sequence VVGGEDAKPG…YVNWIKEKTK (233 aa). The Charge relay system role is filled by histidine 267. 5 residues coordinate Ca(2+): glutamate 281, asparagine 283, glutamate 286, glutamate 288, and glutamate 291. Aspartate 315 functions as the Charge relay system in the catalytic mechanism. Serine 411 acts as the Charge relay system in catalysis.

This sequence belongs to the peptidase S1 family. In terms of assembly, heterodimer of a light chain and a heavy chain; disulfide-linked. Interacts (inactive and activated) with F11 (activated) in calcium-dependent manner. Interacts with SERPINC1. Interacts (activated) with iripin-8, a serine protease inhibitor from Ixodes ricinus saliva. Interacts (inactive and activated) with nitrophorin-2, an anticoagulant protein from Rhodnius prolixus. Activated by factor XIa, which excises the activation peptide. The propeptide can also be removed by snake venom protease. Activated by coagulation factor VIIa-tissue factor (F7-F3) complex in calcium-dependent manner. In terms of processing, the iron and 2-oxoglutarate dependent 3-hydroxylation of aspartate and asparagine is (R) stereospecific within EGF domains. In terms of tissue distribution, detected in blood plasma (at protein level). Synthesized primarily in the liver and secreted in plasma.

Its subcellular location is the secreted. It catalyses the reaction Selective cleavage of Arg-|-Ile bond in factor X to form factor Xa.. Its function is as follows. Factor IX is a vitamin K-dependent plasma protein that participates in the intrinsic pathway of blood coagulation by converting factor X to its active form in the presence of Ca(2+) ions, phospholipids, and factor VIIIa. The polypeptide is Coagulation factor IX (F9) (Homo sapiens (Human)).